Here is an 86-residue protein sequence, read N- to C-terminus: uncharacterized protein (86 aa).

To C.jejuni CJ0253.

This is an uncharacterized protein from Helicobacter pylori (strain ATCC 700392 / 26695) (Campylobacter pylori).